We begin with the raw amino-acid sequence, 149 residues long: Large ribosomal subunit protein uL15C (149 aa).

Positions Arg21–His40 are disordered.

The protein belongs to the universal ribosomal protein uL15 family. In terms of assembly, component of the large ribosomal subunit.

It localises to the cytoplasm. It is found in the cytosol. The protein resides in the endoplasmic reticulum. Functionally, component of the large ribosomal subunit. The ribosome is a large ribonucleoprotein complex responsible for the synthesis of proteins in the cell. The chain is Large ribosomal subunit protein uL15C (rpl27a-3) from Entamoeba histolytica (strain ATCC 30459 / HM-1:IMSS / ABRM).